The primary structure comprises 164 residues: SsrA-binding protein (164 aa).

It belongs to the SmpB family.

Its subcellular location is the cytoplasm. In terms of biological role, required for rescue of stalled ribosomes mediated by trans-translation. Binds to transfer-messenger RNA (tmRNA), required for stable association of tmRNA with ribosomes. tmRNA and SmpB together mimic tRNA shape, replacing the anticodon stem-loop with SmpB. tmRNA is encoded by the ssrA gene; the 2 termini fold to resemble tRNA(Ala) and it encodes a 'tag peptide', a short internal open reading frame. During trans-translation Ala-aminoacylated tmRNA acts like a tRNA, entering the A-site of stalled ribosomes, displacing the stalled mRNA. The ribosome then switches to translate the ORF on the tmRNA; the nascent peptide is terminated with the 'tag peptide' encoded by the tmRNA and targeted for degradation. The ribosome is freed to recommence translation, which seems to be the essential function of trans-translation. The chain is SsrA-binding protein from Corynebacterium glutamicum (strain R).